Reading from the N-terminus, the 45-residue chain is Scolopendra 20417.15 Da toxin (45 aa).

Positions lysine 26–histidine 45 are disordered.

This sequence belongs to the CRISP family. Venom allergen 5-like subfamily. In terms of processing, contains 3 disulfide bonds. In terms of tissue distribution, expressed by the venom gland.

The protein resides in the secreted. In Scolopendra viridicornis nigra (Brazilian giant centipede), this protein is Scolopendra 20417.15 Da toxin.